Here is a 91-residue protein sequence, read N- to C-terminus: Cytochrome c-554(547) (91 aa).

Residues C15, C18, H19, and M64 each contribute to the heme c site.

Monomer. In terms of processing, binds 1 heme c group covalently per subunit.

The chain is Cytochrome c-554(547) from Halothiobacillus neapolitanus (Thiobacillus neapolitanus).